We begin with the raw amino-acid sequence, 53 residues long: uncharacterized protein (53 aa).

This is an uncharacterized protein from Homo sapiens (Human).